A 502-amino-acid polypeptide reads, in one-letter code: Glucose-6-phosphate isomerase (502 aa).

The active-site Proton donor is E331. Catalysis depends on residues H362 and K471.

This sequence belongs to the GPI family.

The protein resides in the cytoplasm. It catalyses the reaction alpha-D-glucose 6-phosphate = beta-D-fructose 6-phosphate. Its pathway is carbohydrate biosynthesis; gluconeogenesis. The protein operates within carbohydrate degradation; glycolysis; D-glyceraldehyde 3-phosphate and glycerone phosphate from D-glucose: step 2/4. In terms of biological role, catalyzes the reversible isomerization of glucose-6-phosphate to fructose-6-phosphate. The protein is Glucose-6-phosphate isomerase of Xylella fastidiosa (strain 9a5c).